A 283-amino-acid chain; its full sequence is ATP phosphoribosyltransferase (283 aa).

This sequence belongs to the ATP phosphoribosyltransferase family. Long subfamily. The cofactor is Mg(2+).

Its subcellular location is the cytoplasm. It carries out the reaction 1-(5-phospho-beta-D-ribosyl)-ATP + diphosphate = 5-phospho-alpha-D-ribose 1-diphosphate + ATP. Its pathway is amino-acid biosynthesis; L-histidine biosynthesis; L-histidine from 5-phospho-alpha-D-ribose 1-diphosphate: step 1/9. With respect to regulation, feedback inhibited by histidine. In terms of biological role, catalyzes the condensation of ATP and 5-phosphoribose 1-diphosphate to form N'-(5'-phosphoribosyl)-ATP (PR-ATP). Has a crucial role in the pathway because the rate of histidine biosynthesis seems to be controlled primarily by regulation of HisG enzymatic activity. This Nocardia farcinica (strain IFM 10152) protein is ATP phosphoribosyltransferase.